The following is a 1065-amino-acid chain: Pumilio domain-containing protein P35G2.14 (1065 aa).

3 disordered regions span residues 1–78 (MHQD…SLRS), 130–265 (ITSK…PWSP), and 422–573 (TTGF…NTNS). Polar residues predominate over residues 16–44 (RNTISKPSNNNPPLDMSSLNNDFGQQLDS). Low complexity predominate over residues 59–77 (NPSSNFNDSNRSNISSSLR). Polar residues-rich tracts occupy residues 134–151 (LQNNSNLSVTSSANRGRT) and 169–189 (SSVSSGKQHLSSLSLHTHFNP). Low complexity-rich tracts occupy residues 190 to 224 (SSSSTVSSDSLESSQQKAPSSSSTATPASAASEII) and 236 to 246 (SASNAANSGSN). 2 stretches are compositionally biased toward polar residues: residues 247 to 262 (TIRARQTTRTRSNTLP) and 434 to 455 (GLNTSLFNTSSGGSLKSPTFEV). Phosphothreonine is present on Thr-260. Low complexity predominate over residues 470 to 483 (PLGSLSSRPKPSSS). Composition is skewed to polar residues over residues 495–522 (LKTSNPYMPSPSLLSGSLANSSEHSSSP) and 529–551 (IHNQPVSSSKSTASLNTNNNGLR). Phosphoserine is present on residues Ser-506, Ser-511, and Ser-515. Thr-554 carries the phosphothreonine modification. Residues 559 to 573 (NISTRSSSESNNTNS) show a composition bias toward low complexity. One can recognise an RRM domain in the interval 592–666 (HALWVGNLPS…DPVCISFAKV (75 aa)). The PUM-HD domain occupies 712–1065 (DLSKIYQILN…ELKKLAEVCA (354 aa)). 6 Pumilio repeats span residues 771–808 (AINWLDEVSDLSSDHLGNTVVQKLFDYCSDPVKEMMLE), 809–844 (RIAPHLAQIGIHKNGTWAAQKIVDVASTEAQMRLIA), 846–884 (HLQPYIPLLFADQFGNYVVQTCLKFGAPMNDFVFEAILN), 886–917 (FWVIAQSRYGSRAVRACLESPDVTEEQRVLVA), 919–954 (AITVYSVHLAMNGNGTLLLTYLVENMNYPHIPILLT), and 956–993 (RFVQDIVRVCTHRLAYNSLLKIISISQGDTACGDLVVD).

The protein localises to the cytoplasm. This is Pumilio domain-containing protein P35G2.14 from Schizosaccharomyces pombe (strain 972 / ATCC 24843) (Fission yeast).